Consider the following 425-residue polypeptide: Serine--tRNA ligase (425 aa).

Residue 231–233 participates in L-serine binding; it reads TAE. An ATP-binding site is contributed by 262–264; that stretch reads RSE. Glutamate 285 lines the L-serine pocket. 349–352 lines the ATP pocket; sequence EISS. Serine 385 is an L-serine binding site.

The protein belongs to the class-II aminoacyl-tRNA synthetase family. Type-1 seryl-tRNA synthetase subfamily. Homodimer. The tRNA molecule binds across the dimer.

Its subcellular location is the cytoplasm. It carries out the reaction tRNA(Ser) + L-serine + ATP = L-seryl-tRNA(Ser) + AMP + diphosphate + H(+). The enzyme catalyses tRNA(Sec) + L-serine + ATP = L-seryl-tRNA(Sec) + AMP + diphosphate + H(+). The protein operates within aminoacyl-tRNA biosynthesis; selenocysteinyl-tRNA(Sec) biosynthesis; L-seryl-tRNA(Sec) from L-serine and tRNA(Sec): step 1/1. Its function is as follows. Catalyzes the attachment of serine to tRNA(Ser). Is also able to aminoacylate tRNA(Sec) with serine, to form the misacylated tRNA L-seryl-tRNA(Sec), which will be further converted into selenocysteinyl-tRNA(Sec). The protein is Serine--tRNA ligase of Halalkalibacterium halodurans (strain ATCC BAA-125 / DSM 18197 / FERM 7344 / JCM 9153 / C-125) (Bacillus halodurans).